Here is a 432-residue protein sequence, read N- to C-terminus: Adenylosuccinate synthetase (432 aa).

GTP contacts are provided by residues 12–18 (GDEGKGK) and 40–42 (GHT). Aspartate 13 (proton acceptor) is an active-site residue. Aspartate 13 and glycine 40 together coordinate Mg(2+). IMP is bound by residues 13-16 (DEGK), 38-41 (NAGH), threonine 132, arginine 146, glutamine 226, threonine 241, and arginine 305. Histidine 41 acts as the Proton donor in catalysis. 301–307 (VVTGRKR) contacts substrate. Residues arginine 307, 333–335 (KLD), and 415–417 (STS) contribute to the GTP site.

Belongs to the adenylosuccinate synthetase family. In terms of assembly, homodimer. Requires Mg(2+) as cofactor.

It is found in the cytoplasm. The enzyme catalyses IMP + L-aspartate + GTP = N(6)-(1,2-dicarboxyethyl)-AMP + GDP + phosphate + 2 H(+). It functions in the pathway purine metabolism; AMP biosynthesis via de novo pathway; AMP from IMP: step 1/2. Functionally, plays an important role in the de novo pathway of purine nucleotide biosynthesis. Catalyzes the first committed step in the biosynthesis of AMP from IMP. The chain is Adenylosuccinate synthetase from Mesorhizobium japonicum (strain LMG 29417 / CECT 9101 / MAFF 303099) (Mesorhizobium loti (strain MAFF 303099)).